A 174-amino-acid chain; its full sequence is Transcriptional repressor NrdR (174 aa).

Residues 3 to 34 fold into a zinc finger; it reads CPICHFPETDVIDTRKLYEGEVIRRRRKCRAC. Positions 49-139 constitute an ATP-cone domain; the sequence is LMVVKKDGTR…VYRSFADIGK (91 aa). A disordered region spans residues 151–174; sequence EGTRNGHSSAATTDQGTTDNHSRM. Over residues 155–174 the composition is skewed to polar residues; the sequence is NGHSSAATTDQGTTDNHSRM.

Belongs to the NrdR family. Zn(2+) is required as a cofactor.

Functionally, negatively regulates transcription of bacterial ribonucleotide reductase nrd genes and operons by binding to NrdR-boxes. The polypeptide is Transcriptional repressor NrdR (Chloroflexus aggregans (strain MD-66 / DSM 9485)).